Reading from the N-terminus, the 537-residue chain is Protoporphyrinogen oxidase 1, chloroplastic (537 aa).

Residues 1-34 (MELSLLRPTTQSLLPSFSKPNLRLNVYKPLRLRC) constitute a chloroplast transit peptide. Position 35 is an N-acetylserine (S35). FAD is bound by residues 63-68 (GGGISG), 90-91 (EA), and 112-115 (GPNS). Basic and acidic residues predominate over residues 256–268 (RKNAPKAERDPRL). The tract at residues 256–275 (RKNAPKAERDPRLPKPQGQT) is disordered. Residue 511–513 (VAL) coordinates FAD.

The protein belongs to the protoporphyrinogen/coproporphyrinogen oxidase family. Protoporphyrinogen oxidase subfamily. Requires FAD as cofactor. Expressed at high levels in the leaves and at low levels in the roots and floral buds.

The protein localises to the plastid. It localises to the chloroplast. It carries out the reaction protoporphyrinogen IX + 3 O2 = protoporphyrin IX + 3 H2O2. It functions in the pathway porphyrin-containing compound metabolism; protoporphyrin-IX biosynthesis; protoporphyrin-IX from protoporphyrinogen-IX: step 1/1. The protein operates within porphyrin-containing compound metabolism; chlorophyll biosynthesis. Inhibited by acifluorfen. Its function is as follows. Catalyzes the 6-electron oxidation of protoporphyrinogen-IX to form protoporphyrin-IX. In Arabidopsis thaliana (Mouse-ear cress), this protein is Protoporphyrinogen oxidase 1, chloroplastic (PPOX1).